The sequence spans 269 residues: MKMTSRKLSDILKQRLQHENRSFLFDREKDTLRVEDQTTKKGITLDLPPIIAKWELKKDEAIDEIVYYVSEAMTAMEGKAQEMTGKETRIYPVIRSTSFPDKSSEDIPLIYDDHTAETRIYYALDLGKTYRLIDQRMLEKENWTKERIRETAAFNLRSLPTVVKEDTVAGNYFYFFRANDGYDASRILNEAILNEYKQHAEGELAISVPHQDVLILADIRNESGYDILGQMSMSFFAGGTVPITALSFLYNEGKLEPVFILAKSRPKKD.

The protein belongs to the UPF0354 family.

This is UPF0354 protein YtpQ (ytpQ) from Bacillus subtilis (strain 168).